A 251-amino-acid polypeptide reads, in one-letter code: Haloacid dehalogenase-like hydrolase domain-containing protein 3 (251 aa).

Lysine 15 is subject to N6-acetyllysine; alternate. The residue at position 15 (lysine 15) is an N6-succinyllysine; alternate. Lysine 130 bears the N6-acetyllysine mark.

The protein belongs to the HAD-like hydrolase superfamily.

The protein is Haloacid dehalogenase-like hydrolase domain-containing protein 3 (HDHD3) of Bos taurus (Bovine).